A 181-amino-acid chain; its full sequence is Large ribosomal subunit protein uL22 (181 aa).

Residues 157–181 (PEAAKKPGKKTSAVEKSKKATAATH) form a disordered region.

Belongs to the universal ribosomal protein uL22 family.

The chain is Large ribosomal subunit protein uL22 (RpL17) from Biphyllus lunatus (Beetle).